We begin with the raw amino-acid sequence, 575 residues long: Carboxylesterase 5A (575 aa).

The signal sequence occupies residues 1 to 20 (MSGNWVHPGQILIWAIWVLA). Cysteine 94 and cysteine 121 form a disulfide bridge. The active-site Acyl-ester intermediate is serine 226. N-linked (GlcNAc...) asparagine glycosylation is present at asparagine 281. Glutamate 345 (charge relay system) is an active-site residue. An N-linked (GlcNAc...) asparagine glycan is attached at asparagine 363. The Charge relay system role is filled by histidine 454. Residues asparagine 513 and asparagine 524 are each glycosylated (N-linked (GlcNAc...) asparagine).

Belongs to the type-B carboxylesterase/lipase family. In terms of processing, N-glycosylated.

It localises to the secreted. It carries out the reaction a carboxylic ester + H2O = an alcohol + a carboxylate + H(+). Its function is as follows. Involved in the detoxification of xenobiotics and in the activation of ester and amide prodrugs. This is Carboxylesterase 5A (CES5A) from Homo sapiens (Human).